The sequence spans 321 residues: Basic peroxidase (321 aa).

A signal peptide spans 1 to 30; that stretch reads MSYHKSSGTTLMVPLFMLLISVNYFMSCNA. Gln-31 carries the post-translational modification Pyrrolidone carboxylic acid. 4 disulfide bridges follow: Cys-41–Cys-117, Cys-74–Cys-79, Cys-123–Cys-317, and Cys-202–Cys-228. His-72 acts as the Proton acceptor in catalysis. Positions 73, 76, 78, 80, and 82 each coordinate Ca(2+). Pro-165 serves as a coordination point for substrate. His-195 lines the heme b pocket. Thr-196 is a Ca(2+) binding site. N-linked (GlcNAc...) asparagine glycans are attached at residues Asn-211 and Asn-221. 3 residues coordinate Ca(2+): Asp-241, Thr-244, and Asp-249.

This sequence belongs to the peroxidase family. Classical plant (class III) peroxidase subfamily. Heme b serves as cofactor. The cofactor is Ca(2+). In terms of processing, N-glycosylated. As to expression, expressed in tracheary elements, roots, young and old hypocotyls, and stems in the partially glycosylated form and in roots and young hypocotyls in the fully glycosylated form. None of the isoforms is significantly expressed in leaves or cotyledons.

It is found in the secreted. The catalysed reaction is 2 a phenolic donor + H2O2 = 2 a phenolic radical donor + 2 H2O. Functionally, removal of H(2)O(2), oxidation of toxic reductants, biosynthesis and degradation of lignin, suberization, auxin catabolism, response to environmental stresses such as wounding, pathogen attack and oxidative stress. These functions might be dependent on each isozyme/isoform in each plant tissue. Involved in the synthesis of highly polymerized lignins. This is Basic peroxidase (POD3) from Zinnia elegans (Garden zinnia).